A 630-amino-acid polypeptide reads, in one-letter code: Mitochondrial Rho GTPase 1 (630 aa).

One can recognise a Miro 1 domain in the interval 1–168 (MKEVRVVICG…FYMCRACVIY (168 aa)). Over 1–598 (MKEVRVVICG…EEDSNKTNYQ (598 aa)) the chain is Cytoplasmic. Residues 10–17 (GDQGVGKS), 57–61 (DTQSD), and 113–116 (NKSE) each bind GTP. EF-hand domains follow at residues 184 to 219 (ATIHALSRIFFLIDKNNDDLLSVDELNSLSEKCFSK) and 304 to 339 (KGYRFLVDLFYQFDRDNDGALNNEELSALFRHTPGL). 8 residues coordinate Ca(2+): Asp197, Asn199, Asp201, Glu208, Asp317, Asp319, Asp321, and Glu328. The region spanning 419–579 (RNVFLCFVVG…FIQLAESAQY (161 aa)) is the Miro 2 domain. Residues 428–435 (GSKSCGKT), 459–463 (EFQST), and 527–530 (TKAD) each bind GTP. A helical; Anchor for type IV membrane protein membrane pass occupies residues 599–619 (LVAALTAFGALLLSVGGSLTW). Over 620–630 (KIIKHQYYSKK) the chain is Mitochondrial intermembrane.

Belongs to the mitochondrial Rho GTPase family.

Its subcellular location is the mitochondrion outer membrane. Mitochondrial GTPase involved in mitochondrial trafficking. Probably involved in control of anterograde transport of mitochondria and their subcellular distribution. This Schizosaccharomyces pombe (strain 972 / ATCC 24843) (Fission yeast) protein is Mitochondrial Rho GTPase 1 (gem1).